We begin with the raw amino-acid sequence, 132 residues long: Fluoride-specific ion channel FluC 2 (132 aa).

4 helical membrane passes run 8–28, 41–61, 66–86, and 96–116; these read LQLE…GALL, LLVN…PAAP, LLGI…LAAV, and AALG…ALGF. Residues glycine 73 and threonine 76 each coordinate Na(+).

It belongs to the fluoride channel Fluc/FEX (TC 1.A.43) family.

The protein localises to the cell inner membrane. It carries out the reaction fluoride(in) = fluoride(out). Na(+) is not transported, but it plays an essential structural role and its presence is essential for fluoride channel function. Fluoride-specific ion channel. Important for reducing fluoride concentration in the cell, thus reducing its toxicity. This Synechococcus sp. (strain CC9605) protein is Fluoride-specific ion channel FluC 2.